A 487-amino-acid polypeptide reads, in one-letter code: Betaine aldehyde dehydrogenase (487 aa).

Positions 27 and 93 each coordinate K(+). 149–151 provides a ligand contact to NAD(+); the sequence is GAW. The Charge relay system role is filled by K161. Residues 175-178 and 228-231 contribute to the NAD(+) site; these read KPSE and SVPT. L243 provides a ligand contact to K(+). Catalysis depends on E249, which acts as the Proton acceptor. NAD(+)-binding residues include G251, C283, and E384. The Nucleophile role is filled by C283. C283 carries the cysteine sulfenic acid (-SOH) modification. K454 and G457 together coordinate K(+). E461 acts as the Charge relay system in catalysis.

This sequence belongs to the aldehyde dehydrogenase family. In terms of assembly, dimer of dimers. It depends on K(+) as a cofactor.

It catalyses the reaction betaine aldehyde + NAD(+) + H2O = glycine betaine + NADH + 2 H(+). The protein operates within amine and polyamine biosynthesis; betaine biosynthesis via choline pathway; betaine from betaine aldehyde: step 1/1. Its function is as follows. Involved in the biosynthesis of the osmoprotectant glycine betaine. Catalyzes the irreversible oxidation of betaine aldehyde to the corresponding acid. This is Betaine aldehyde dehydrogenase from Brucella abortus (strain S19).